Consider the following 151-residue polypeptide: Regulatory protein RecX (151 aa).

This sequence belongs to the RecX family.

The protein localises to the cytoplasm. Its function is as follows. Modulates RecA activity. This Haemophilus ducreyi (strain 35000HP / ATCC 700724) protein is Regulatory protein RecX.